Here is a 689-residue protein sequence, read N- to C-terminus: DNA-directed RNA polymerase subunit beta' (689 aa).

Residues Cys-69, Cys-71, Cys-87, and Cys-90 each coordinate Zn(2+). Mg(2+) contacts are provided by Asp-489, Asp-491, and Asp-493.

This sequence belongs to the RNA polymerase beta' chain family. RpoC1 subfamily. In terms of assembly, in plastids the minimal PEP RNA polymerase catalytic core is composed of four subunits: alpha, beta, beta', and beta''. When a (nuclear-encoded) sigma factor is associated with the core the holoenzyme is formed, which can initiate transcription. It depends on Mg(2+) as a cofactor. Zn(2+) is required as a cofactor.

It is found in the plastid. Its subcellular location is the chloroplast. The catalysed reaction is RNA(n) + a ribonucleoside 5'-triphosphate = RNA(n+1) + diphosphate. In terms of biological role, DNA-dependent RNA polymerase catalyzes the transcription of DNA into RNA using the four ribonucleoside triphosphates as substrates. This chain is DNA-directed RNA polymerase subunit beta', found in Helianthus annuus (Common sunflower).